We begin with the raw amino-acid sequence, 1432 residues long: Gag-Pol polyprotein (1432 aa).

Residue Gly2 is the site of N-myristoyl glycine; by host attachment. An interaction with Gp41 region spans residues 7-31 (ILSGGKLDDWEKIRLRPGGKKKYRI). Positions 8–43 (LSGGKLDDWEKIRLRPGGKKKYRIKHLVWASRELDR) are interaction with host CALM1. An interaction with host AP3D1 region spans residues 12-19 (KLDDWEKI). Residues 14 to 33 (DDWEKIRLRPGGKKKYRIKH) form an interaction with membrane phosphatidylinositol 4,5-bisphosphate and RNA region. Positions 16–22 (WEKIRLR) match the Nuclear export signal motif. The Nuclear localization signal signature appears at 26-32 (KKKYRIK). Residues 73 to 77 (QEIKS) are interaction with membrane phosphatidylinositol 4,5-bisphosphate. A Phosphotyrosine; by host modification is found at Tyr132. The interaction with human PPIA/CYPA and NUP153 stretch occupies residues 189–227 (NTIGGHQAAMQMLKDTINEEAAEWDRVHPVHAGPIAPGQ). Residues 277–363 (YSPVSILDIR…GGPGHKARVL (87 aa)) form a dimerization/Multimerization of capsid protein p24 region. 2 CCHC-type zinc fingers span residues 389-406 (VKCF…NCRA) and 410-427 (KGCW…DCTE). The interval 443–483 (EARELSPEQTRANSPTSREPRARRGDPLPETGAEGQGTVSS) is disordered. A compositionally biased stretch (polar residues) spans 449–459 (PEQTRANSPTS). A compositionally biased stretch (basic and acidic residues) spans 460–469 (REPRARRGDP). Residues 486-490 (PQITL) form a dimerization of protease region. Positions 505-574 (REALLDTGAD…TPVNIIGRNM (70 aa)) constitute a Peptidase A2 domain. Asp510 functions as the For protease activity; shared with dimeric partner in the catalytic mechanism. Dimerization of protease stretches follow at residues 534–540 (GIGGFIK) and 573–585 (NMLT…LNFP). One can recognise a Reverse transcriptase domain in the interval 628–818 (EGKISRVGPE…PPFLWMGYEL (191 aa)). Asp694, Asp769, and Asp770 together coordinate Mg(2+). Residues 811–819 (FLWMGYELH) are RT 'primer grip'. Positions 982 to 998 (WETWWTDYWQATWIPEW) match the Tryptophan repeat motif motif. Residues 1018 to 1141 (IMGAETFYVD…VDKLVSSGIR (124 aa)) enclose the RNase H type-1 domain. 4 residues coordinate Mg(2+): Asp1027, Glu1062, Asp1082, and Asp1133. Residues 1147–1188 (DGIDKAQEDHEKYHSNWRAMASDFNLPPVVAKEIVASCDKCQ) form an Integrase-type zinc finger. Zn(2+) is bound by residues His1156, His1160, Cys1184, and Cys1187. Residues 1198 to 1348 (VDCSPGIWQL…SAGERIIDII (151 aa)) form the Integrase catalytic domain. Mg(2+) is bound by residues Asp1208, Asp1260, and Glu1296. The integrase-type DNA-binding region spans 1367–1414 (FRVYYRDSRDPIWKGPAKLPWKGEGAVVIQDNSEIKVVPRRKAKIIRD).

In terms of assembly, homotrimer; further assembles as hexamers of trimers. Interacts with gp41 (via C-terminus). Interacts with host CALM1; this interaction induces a conformational change in the Matrix protein, triggering exposure of the myristate group. Interacts with host AP3D1; this interaction allows the polyprotein trafficking to multivesicular bodies during virus assembly. Part of the pre-integration complex (PIC) which is composed of viral genome, matrix protein, Vpr and integrase. As to quaternary structure, homodimer; the homodimer further multimerizes as homohexamers or homopentamers. Interacts with human PPIA/CYPA; This interaction stabilizes the capsid. Interacts with human NUP153. Interacts with host PDZD8; this interaction stabilizes the capsid. Interacts with monkey TRIM5; this interaction destabilizes the capsid. Homodimer, whose active site consists of two apposed aspartic acid residues. In terms of assembly, heterodimer of p66 RT and p51 RT (RT p66/p51). Heterodimerization of RT is essential for DNA polymerase activity. The overall folding of the subdomains is similar in p66 RT and p51 RT but the spatial arrangements of the subdomains are dramatically different. As to quaternary structure, homotetramer; may further associate as a homohexadecamer. Part of the pre-integration complex (PIC) which is composed of viral genome, matrix protein, Vpr and integrase. Interacts with human SMARCB1/INI1 and human PSIP1/LEDGF isoform 1. Interacts with human KPNA3; this interaction might play a role in nuclear import of the pre-integration complex. Interacts with human NUP153; this interaction might play a role in nuclear import of the pre-integration complex. The cofactor is Mg(2+). In terms of processing, specific enzymatic cleavages by the viral protease yield mature proteins. The protease is released by autocatalytic cleavage. The polyprotein is cleaved during and after budding, this process is termed maturation. Proteolytic cleavage of p66 RT removes the RNase H domain to yield the p51 RT subunit. Nucleocapsid protein p7 might be further cleaved after virus entry. Tyrosine phosphorylated presumably in the virion by a host kinase. Phosphorylation is apparently not a major regulator of membrane association. Post-translationally, phosphorylated possibly by host MAPK1; this phosphorylation is necessary for Pin1-mediated virion uncoating. In terms of processing, methylated by host PRMT6, impairing its function by reducing RNA annealing and the initiation of reverse transcription.

The protein localises to the host cell membrane. The protein resides in the host endosome. It localises to the host multivesicular body. Its subcellular location is the virion membrane. It is found in the host nucleus. The protein localises to the host cytoplasm. The protein resides in the virion. The catalysed reaction is Specific for a P1 residue that is hydrophobic, and P1' variable, but often Pro.. It carries out the reaction Endohydrolysis of RNA in RNA/DNA hybrids. Three different cleavage modes: 1. sequence-specific internal cleavage of RNA. Human immunodeficiency virus type 1 and Moloney murine leukemia virus enzymes prefer to cleave the RNA strand one nucleotide away from the RNA-DNA junction. 2. RNA 5'-end directed cleavage 13-19 nucleotides from the RNA end. 3. DNA 3'-end directed cleavage 15-20 nucleotides away from the primer terminus.. The enzyme catalyses 3'-end directed exonucleolytic cleavage of viral RNA-DNA hybrid.. It catalyses the reaction DNA(n) + a 2'-deoxyribonucleoside 5'-triphosphate = DNA(n+1) + diphosphate. Its activity is regulated as follows. Protease: The viral protease is inhibited by many synthetic protease inhibitors (PIs), such as amprenavir, atazanavir, indinavir, loprinavir, nelfinavir, ritonavir and saquinavir. Use of protease inhibitors in tritherapy regimens permit more ambitious therapeutic strategies. Reverse transcriptase/ribonuclease H: RT can be inhibited either by nucleoside RT inhibitors (NRTIs) or by non nucleoside RT inhibitors (NNRTIs). NRTIs act as chain terminators, whereas NNRTIs inhibit DNA polymerization by binding a small hydrophobic pocket near the RT active site and inducing an allosteric change in this region. Classical NRTIs are abacavir, adefovir (PMEA), didanosine (ddI), lamivudine (3TC), stavudine (d4T), tenofovir (PMPA), zalcitabine (ddC), and zidovudine (AZT). Classical NNRTIs are atevirdine (BHAP U-87201E), delavirdine, efavirenz (DMP-266), emivirine (I-EBU), and nevirapine (BI-RG-587). The tritherapies used as a basic effective treatment of AIDS associate two NRTIs and one NNRTI. Functionally, mediates, with Gag polyprotein, the essential events in virion assembly, including binding the plasma membrane, making the protein-protein interactions necessary to create spherical particles, recruiting the viral Env proteins, and packaging the genomic RNA via direct interactions with the RNA packaging sequence (Psi). Gag-Pol polyprotein may regulate its own translation, by the binding genomic RNA in the 5'-UTR. At low concentration, the polyprotein would promote translation, whereas at high concentration, the polyprotein would encapsidate genomic RNA and then shut off translation. Its function is as follows. Targets the polyprotein to the plasma membrane via a multipartite membrane-binding signal, that includes its myristoylated N-terminus. Matrix protein is part of the pre-integration complex. Implicated in the release from host cell mediated by Vpu. Binds to RNA. In terms of biological role, forms the conical core that encapsulates the genomic RNA-nucleocapsid complex in the virion. Most core are conical, with only 7% tubular. The core is constituted by capsid protein hexamer subunits. The core is disassembled soon after virion entry. Host restriction factors such as TRIM5-alpha or TRIMCyp bind retroviral capsids and cause premature capsid disassembly, leading to blocks in reverse transcription. Capsid restriction by TRIM5 is one of the factors which restricts HIV-1 to the human species. Host PIN1 apparently facilitates the virion uncoating. On the other hand, interactions with PDZD8 or CYPA stabilize the capsid. Encapsulates and protects viral dimeric unspliced genomic RNA (gRNA). Binds these RNAs through its zinc fingers. Acts as a nucleic acid chaperone which is involved in rearangement of nucleic acid secondary structure during gRNA retrotranscription. Also facilitates template switch leading to recombination. As part of the polyprotein, participates in gRNA dimerization, packaging, tRNA incorporation and virion assembly. Functionally, aspartyl protease that mediates proteolytic cleavages of Gag and Gag-Pol polyproteins during or shortly after the release of the virion from the plasma membrane. Cleavages take place as an ordered, step-wise cascade to yield mature proteins. This process is called maturation. Displays maximal activity during the budding process just prior to particle release from the cell. Also cleaves Nef and Vif, probably concomitantly with viral structural proteins on maturation of virus particles. Hydrolyzes host EIF4GI and PABP1 in order to shut off the capped cellular mRNA translation. The resulting inhibition of cellular protein synthesis serves to ensure maximal viral gene expression and to evade host immune response. Also mediates cleavage of host YTHDF3. Mediates cleavage of host CARD8, thereby activating the CARD8 inflammasome, leading to the clearance of latent HIV-1 in patient CD4(+) T-cells after viral reactivation; in contrast, HIV-1 can evade CARD8-sensing when its protease remains inactive in infected cells prior to viral budding. Its function is as follows. Multifunctional enzyme that converts the viral RNA genome into dsDNA in the cytoplasm, shortly after virus entry into the cell. This enzyme displays a DNA polymerase activity that can copy either DNA or RNA templates, and a ribonuclease H (RNase H) activity that cleaves the RNA strand of RNA-DNA heteroduplexes in a partially processive 3' to 5' endonucleasic mode. Conversion of viral genomic RNA into dsDNA requires many steps. A tRNA(3)-Lys binds to the primer-binding site (PBS) situated at the 5'-end of the viral RNA. RT uses the 3' end of the tRNA primer to perform a short round of RNA-dependent minus-strand DNA synthesis. The reading proceeds through the U5 region and ends after the repeated (R) region which is present at both ends of viral RNA. The portion of the RNA-DNA heteroduplex is digested by the RNase H, resulting in a ssDNA product attached to the tRNA primer. This ssDNA/tRNA hybridizes with the identical R region situated at the 3' end of viral RNA. This template exchange, known as minus-strand DNA strong stop transfer, can be either intra- or intermolecular. RT uses the 3' end of this newly synthesized short ssDNA to perform the RNA-dependent minus-strand DNA synthesis of the whole template. RNase H digests the RNA template except for two polypurine tracts (PPTs) situated at the 5'-end and near the center of the genome. It is not clear if both polymerase and RNase H activities are simultaneous. RNase H probably can proceed both in a polymerase-dependent (RNA cut into small fragments by the same RT performing DNA synthesis) and a polymerase-independent mode (cleavage of remaining RNA fragments by free RTs). Secondly, RT performs DNA-directed plus-strand DNA synthesis using the PPTs that have not been removed by RNase H as primers. PPTs and tRNA primers are then removed by RNase H. The 3' and 5' ssDNA PBS regions hybridize to form a circular dsDNA intermediate. Strand displacement synthesis by RT to the PBS and PPT ends produces a blunt ended, linear dsDNA copy of the viral genome that includes long terminal repeats (LTRs) at both ends. In terms of biological role, catalyzes viral DNA integration into the host chromosome, by performing a series of DNA cutting and joining reactions. This enzyme activity takes place after virion entry into a cell and reverse transcription of the RNA genome in dsDNA. The first step in the integration process is 3' processing. This step requires a complex comprising the viral genome, matrix protein, Vpr and integrase. This complex is called the pre-integration complex (PIC). The integrase protein removes 2 nucleotides from each 3' end of the viral DNA, leaving recessed CA OH's at the 3' ends. In the second step, the PIC enters cell nucleus. This process is mediated through integrase and Vpr proteins, and allows the virus to infect a non dividing cell. This ability to enter the nucleus is specific of lentiviruses, other retroviruses cannot and rely on cell division to access cell chromosomes. In the third step, termed strand transfer, the integrase protein joins the previously processed 3' ends to the 5' ends of strands of target cellular DNA at the site of integration. The 5'-ends are produced by integrase-catalyzed staggered cuts, 5 bp apart. A Y-shaped, gapped, recombination intermediate results, with the 5'-ends of the viral DNA strands and the 3' ends of target DNA strands remaining unjoined, flanking a gap of 5 bp. The last step is viral DNA integration into host chromosome. This involves host DNA repair synthesis in which the 5 bp gaps between the unjoined strands are filled in and then ligated. Since this process occurs at both cuts flanking the HIV genome, a 5 bp duplication of host DNA is produced at the ends of HIV-1 integration. Alternatively, Integrase may catalyze the excision of viral DNA just after strand transfer, this is termed disintegration. The protein is Gag-Pol polyprotein (gag-pol) of Human immunodeficiency virus type 1 group M subtype J (isolate SE9280) (HIV-1).